The sequence spans 202 residues: Peroxynitrite isomerase (202 aa).

The GXWXGXG signature appears at 21–27 (GEWEGRG). Heme b is bound at residue His193.

The protein belongs to the nitrobindin family. In terms of assembly, homodimer. Requires heme b as cofactor.

The enzyme catalyses peroxynitrite = nitrate. It functions in the pathway nitrogen metabolism. Heme-binding protein able to scavenge peroxynitrite and to protect free L-tyrosine against peroxynitrite-mediated nitration, by acting as a peroxynitrite isomerase that converts peroxynitrite to nitrate. Therefore, this protein likely plays a role in peroxynitrite sensing and in the detoxification of reactive nitrogen and oxygen species (RNS and ROS, respectively). Is able to bind nitric oxide (NO) in vitro, but may act as a sensor of peroxynitrite levels in vivo. The polypeptide is Peroxynitrite isomerase (Pseudarthrobacter chlorophenolicus (strain ATCC 700700 / DSM 12829 / CIP 107037 / JCM 12360 / KCTC 9906 / NCIMB 13794 / A6) (Arthrobacter chlorophenolicus)).